Here is a 247-residue protein sequence, read N- to C-terminus: Probable phosphatase Shew_1420 (247 aa).

Zn(2+)-binding residues include His-8, His-10, His-16, His-41, Glu-74, His-102, His-132, Asp-193, and His-195.

The protein belongs to the PHP family. Requires Zn(2+) as cofactor.

This chain is Probable phosphatase Shew_1420, found in Shewanella loihica (strain ATCC BAA-1088 / PV-4).